We begin with the raw amino-acid sequence, 481 residues long: uncharacterized protein (481 aa).

Residues 1–28 form a disordered region; it reads MPQSNHYSHQSRSHNDRRRQQPDEKVQA. Residues 29–87 enclose the TRAM domain; sequence TVNIGQRFPLTIRRLGINGEGIGYYKHVITFVKGALPEEVVVAEVTAVHPRYLEAKIRS. Residues Gln-313, Tyr-342, Asp-363, and Asp-411 each coordinate S-adenosyl-L-methionine. Residue Cys-438 is the Nucleophile of the active site.

This sequence belongs to the class I-like SAM-binding methyltransferase superfamily. RNA M5U methyltransferase family.

This is an uncharacterized protein from Lactiplantibacillus plantarum (strain ATCC BAA-793 / NCIMB 8826 / WCFS1) (Lactobacillus plantarum).